The following is a 444-amino-acid chain: Exodeoxyribonuclease 7 large subunit (444 aa).

The protein belongs to the XseA family. Heterooligomer composed of large and small subunits.

It localises to the cytoplasm. It carries out the reaction Exonucleolytic cleavage in either 5'- to 3'- or 3'- to 5'-direction to yield nucleoside 5'-phosphates.. Functionally, bidirectionally degrades single-stranded DNA into large acid-insoluble oligonucleotides, which are then degraded further into small acid-soluble oligonucleotides. This Aliivibrio salmonicida (strain LFI1238) (Vibrio salmonicida (strain LFI1238)) protein is Exodeoxyribonuclease 7 large subunit.